Here is a 1738-residue protein sequence, read N- to C-terminus: Interaptin (1738 aa).

The actin-binding stretch occupies residues methionine 1–tyrosine 248. At methionine 1–proline 1705 the chain is on the cytoplasmic side. Calponin-homology (CH) domains follow at residues isoleucine 22–glutamine 128 and threonine 146–glutamine 249. 3 disordered regions span residues serine 285–serine 350, isoleucine 1068–aspartate 1090, and leucine 1589–isoleucine 1627. Positions glutamine 292–asparagine 301 are enriched in low complexity. Residues leucine 302–lysine 316 show a composition bias toward polar residues. Composition is skewed to low complexity over residues serine 317–threonine 344, isoleucine 1068–leucine 1086, and leucine 1589–proline 1617. Positions glutamate 373–glutamine 1598 form a coiled coil. The helical; Anchor for type IV membrane protein transmembrane segment at isoleucine 1706–phenylalanine 1726 threads the bilayer.

This sequence belongs to the alpha-actinin family.

Its subcellular location is the nucleus membrane. The protein resides in the endoplasmic reticulum membrane. It is found in the golgi apparatus. The protein localises to the golgi stack membrane. It localises to the cytoplasm. Its subcellular location is the cytoskeleton. The protein resides in the microtubule organizing center. It is found in the centrosome. Its function is as follows. May function as linker between cellular membranes and the actin cytoskeleton. Required for normal development of fruiting bodies. In Dictyostelium discoideum (Social amoeba), this protein is Interaptin (abpD).